A 917-amino-acid polypeptide reads, in one-letter code: Hexokinase HKDC1 (917 aa).

The segment at 1-20 is mitochondrial-binding peptide (MBP); sequence MFAVHLMAFYFSKLKEDQIK. Hexokinase domains follow at residues 16–458 and 464–905; these read EDQI…MVTA and QAQR…LITA. ATP-binding positions include arginine 30 and 84–89; that span reads DLGGSK. The segment at 73 to 207 is hexokinase small subdomain 1; sequence DGSENGEFLS…DMDVDILALV (135 aa). 84-91 lines the D-glucose 6-phosphate pocket; that stretch reads DLGGSKFR. Residues serine 155, 172–173, and 208–209 contribute to the D-glucose site; these read TK and ND. Positions 208–447 are hexokinase large subdomain 1; it reads NDTVGTMMTC…CDVRFLLSES (240 aa). Aspartate 209 and threonine 232 together coordinate D-glucose 6-phosphate. Residues asparagine 235, glutamate 260, and 291 to 294 each bind D-glucose; that span reads QLFE. D-glucose 6-phosphate is bound at residue 413-415; it reads DGT. Residue 425–426 coordinates ATP; the sequence is KR. D-glucose 6-phosphate contacts are provided by residues serine 449 and 532–536; that span reads DLGGT. Residues 521 to 654 are hexokinase small subdomain 2; that stretch reads DGTEKGKFLA…EFDLDIVAVV (134 aa). 532–537 contacts ATP; it reads DLGGTN. D-glucose is bound by residues 602–603, 619–620, and 655–656; these read SF, TK, and ND. Residues 655 to 894 are hexokinase large subdomain 2; it reads NDTVGTMMTC…CDVTFMLSED (240 aa). The D-glucose 6-phosphate site is built by aspartate 656 and threonine 679. ATP is bound at residue threonine 679. Residues 681 to 682, glutamate 707, and glutamate 741 contribute to the D-glucose site; that span reads SN. Residues 746 to 747, 783 to 787, and 862 to 866 contribute to the ATP site; these read GM, TKFLS, and TLYKL. D-glucose 6-phosphate contacts are provided by residues 860–862 and serine 896; that span reads DGT.

Belongs to the hexokinase family. Widely expressed. Highly expressed in the brush border, surface epithelium and the myenteric plexus of the small and large intestines; the acinar centrocytes and interlobular ducts of the pancreas; and the alveolar macrophages in the lungs (at protein level). Present at moderate level in the thyroid follicular epithelium (at protein level).

It localises to the cytoplasm. Its subcellular location is the mitochondrion membrane. It is found in the photoreceptor inner segment. It catalyses the reaction a D-hexose + ATP = a D-hexose 6-phosphate + ADP + H(+). The catalysed reaction is D-glucose + ATP = D-glucose 6-phosphate + ADP + H(+). Its pathway is carbohydrate metabolism; hexose metabolism. It participates in carbohydrate degradation; glycolysis; D-glyceraldehyde 3-phosphate and glycerone phosphate from D-glucose: step 1/4. In terms of biological role, catalyzes the phosphorylation of hexose to hexose 6-phosphate, although at very low level compared to other hexokinases. Has low glucose phosphorylating activity compared to other hexokinases. Involved in glucose homeostasis and hepatic lipid accumulation. Required to maintain whole-body glucose homeostasis during pregnancy; however additional evidences are required to confirm this role. The polypeptide is Hexokinase HKDC1 (Homo sapiens (Human)).